The chain runs to 640 residues: DNA topoisomerase 3 (640 aa).

Positions 21–175 constitute a Toprim domain; that stretch reads RVLCVAEKNS…WRAQFSHLEP (155 aa). E27, D137, and D139 together coordinate Mg(2+). The region spanning 189–618 is the Topo IA-type catalytic domain; it reads DMKLVAAVEC…QLLPLYKEAF (430 aa). Y354 functions as the O-(5'-phospho-DNA)-tyrosine intermediate in the catalytic mechanism.

Belongs to the type IA topoisomerase family. It depends on Mg(2+) as a cofactor.

The catalysed reaction is ATP-independent breakage of single-stranded DNA, followed by passage and rejoining.. Functionally, introduces a single-strand break via transesterification at a target site in duplex DNA. Releases the supercoiling and torsional tension of DNA introduced during the DNA replication and transcription by transiently cleaving and rejoining one strand of the DNA duplex. The scissile phosphodiester is attacked by the catalytic tyrosine of the enzyme, resulting in the formation of a DNA-(5'-phosphotyrosyl)-enzyme intermediate and the expulsion of a 3'-OH DNA strand. The chain is DNA topoisomerase 3 (TOP3) from Candidozyma auris (Yeast).